The following is a 374-amino-acid chain: Alcohol dehydrogenase S chain (374 aa).

The residue at position 2 (serine 2) is an N-acetylserine. Zn(2+) contacts are provided by cysteine 47, histidine 68, cysteine 98, cysteine 101, cysteine 104, cysteine 112, and cysteine 174. NAD(+) is bound by residues 199 to 204 (GLGGVG), aspartate 223, lysine 228, 292 to 294 (VGV), and arginine 369.

The protein belongs to the zinc-containing alcohol dehydrogenase family. Class-I subfamily. As to quaternary structure, dimer of identical or non-identical chains of two types (E and S) coded by 2 separate genes at different loci. Zn(2+) serves as cofactor.

The protein localises to the cytoplasm. The catalysed reaction is a primary alcohol + NAD(+) = an aldehyde + NADH + H(+). It carries out the reaction a secondary alcohol + NAD(+) = a ketone + NADH + H(+). This is Alcohol dehydrogenase S chain from Equus caballus (Horse).